A 268-amino-acid polypeptide reads, in one-letter code: Zinc transporter ZupT (268 aa).

The next 8 membrane-spanning stretches (helical) occupy residues 5–25, 36–56, 75–95, 124–144, 157–177, 187–207, 211–231, and 248–268; these read ILFA…GSLI, VLTI…MIEI, VVTV…DKLI, MGLF…LATF, IAVA…APIF, FILS…GYFL, FFSP…MVYI, and FAIG…LLFT. Residues Asn136 and Glu139 each coordinate Fe(2+). Positions 139 and 164 each coordinate Zn(2+). Fe(2+) is bound by residues Asn165, Glu168, and Glu197. Glu168 contributes to the Zn(2+) binding site.

Belongs to the ZIP transporter (TC 2.A.5) family. ZupT subfamily.

The protein resides in the cell membrane. The enzyme catalyses Zn(2+)(in) = Zn(2+)(out). Mediates zinc uptake. May also transport other divalent cations. The polypeptide is Zinc transporter ZupT (Chlorobium chlorochromatii (strain CaD3)).